We begin with the raw amino-acid sequence, 270 residues long: Phosphonoacetaldehyde hydrolase (270 aa).

The active-site Nucleophile is Asp-11. Positions 11 and 13 each coordinate Mg(2+). Lys-53 acts as the Schiff-base intermediate with substrate in catalysis. Asp-187 contacts Mg(2+).

The protein belongs to the HAD-like hydrolase superfamily. PhnX family. As to quaternary structure, homodimer. Mg(2+) serves as cofactor.

It catalyses the reaction phosphonoacetaldehyde + H2O = acetaldehyde + phosphate + H(+). Involved in phosphonate degradation. The protein is Phosphonoacetaldehyde hydrolase of Salmonella paratyphi C (strain RKS4594).